The sequence spans 295 residues: Light-independent protochlorophyllide reductase iron-sulfur ATP-binding protein (295 aa).

Residues G39 to T44 and K68 each bind ATP. Residue S43 participates in Mg(2+) binding. [4Fe-4S] cluster-binding residues include C124 and C158. N209–R210 lines the ATP pocket.

It belongs to the NifH/BchL/ChlL family. As to quaternary structure, homodimer. Protochlorophyllide reductase is composed of three subunits; ChlL, ChlN and ChlB. [4Fe-4S] cluster is required as a cofactor.

The enzyme catalyses chlorophyllide a + oxidized 2[4Fe-4S]-[ferredoxin] + 2 ADP + 2 phosphate = protochlorophyllide a + reduced 2[4Fe-4S]-[ferredoxin] + 2 ATP + 2 H2O. Its pathway is porphyrin-containing compound metabolism; chlorophyll biosynthesis (light-independent). In terms of biological role, component of the dark-operative protochlorophyllide reductase (DPOR) that uses Mg-ATP and reduced ferredoxin to reduce ring D of protochlorophyllide (Pchlide) to form chlorophyllide a (Chlide). This reaction is light-independent. The L component serves as a unique electron donor to the NB-component of the complex, and binds Mg-ATP. The chain is Light-independent protochlorophyllide reductase iron-sulfur ATP-binding protein from Prochlorococcus marinus (strain AS9601).